The chain runs to 131 residues: Phosphoribosyl-AMP cyclohydrolase (131 aa).

Asp76 lines the Mg(2+) pocket. Cys77 contacts Zn(2+). Residues Asp78 and Asp80 each contribute to the Mg(2+) site. Cys94 and Cys101 together coordinate Zn(2+).

Belongs to the PRA-CH family. Homodimer. The cofactor is Mg(2+). It depends on Zn(2+) as a cofactor.

The protein localises to the cytoplasm. It carries out the reaction 1-(5-phospho-beta-D-ribosyl)-5'-AMP + H2O = 1-(5-phospho-beta-D-ribosyl)-5-[(5-phospho-beta-D-ribosylamino)methylideneamino]imidazole-4-carboxamide. Its pathway is amino-acid biosynthesis; L-histidine biosynthesis; L-histidine from 5-phospho-alpha-D-ribose 1-diphosphate: step 3/9. In terms of biological role, catalyzes the hydrolysis of the adenine ring of phosphoribosyl-AMP. The chain is Phosphoribosyl-AMP cyclohydrolase from Stutzerimonas stutzeri (strain A1501) (Pseudomonas stutzeri).